The primary structure comprises 354 residues: Guanine nucleotide-binding protein G(o) subunit alpha (354 aa).

Residue G2 is the site of N-myristoyl glycine attachment. C3 is lipidated: S-palmitoyl cysteine. In terms of domain architecture, G-alpha spans 32 to 354 (KDVKLLLLGA…AYNLRGCGLY (323 aa)). Positions 35-48 (KLLLLGAGESGKST) are G1 motif. E43, K46, S47, T48, S152, L176, R177, T178, and R179 together coordinate GTP. S47 contributes to the Mg(2+) binding site. The tract at residues 174-182 (DILRTRVKT) is G2 motif. Position 182 (T182) interacts with Mg(2+). A G3 motif region spans residues 197–206 (FRLFDVGGQR). Residues 266-273 (ILFLNKKD) are G4 motif. Residues N270, D273, and C325 each contribute to the GTP site. Positions 324–329 (TCATDT) are G5 motif.

This sequence belongs to the G-alpha family. G(i/o/t/z) subfamily. As to quaternary structure, g proteins are composed of 3 units; alpha, beta and gamma.

The catalysed reaction is GTP + H2O = GDP + phosphate + H(+). Its function is as follows. Guanine nucleotide-binding proteins (G proteins) function as transducers downstream of G protein-coupled receptors (GPCRs) in numerous signaling cascades. The alpha chain contains the guanine nucleotide binding site and alternates between an active, GTP-bound state and an inactive, GDP-bound state. Signaling by an activated GPCR promotes GDP release and GTP binding. The alpha subunit has a low GTPase activity that converts bound GTP to GDP, thereby terminating the signal. Both GDP release and GTP hydrolysis are modulated by numerous regulatory proteins. Signaling is mediated via effector proteins, such as adenylate cyclase. Inhibits adenylate cyclase activity, leading to decreased intracellular cAMP levels. This Xenopus laevis (African clawed frog) protein is Guanine nucleotide-binding protein G(o) subunit alpha (gna0).